Reading from the N-terminus, the 274-residue chain is NADPH-dependent 7-cyano-7-deazaguanine reductase (274 aa).

80 to 82 (VES) contributes to the substrate binding site. 82-83 (SK) contacts NADPH. The active-site Thioimide intermediate is the C181. D188 serves as the catalytic Proton donor. Position 220–221 (220–221 (HE)) interacts with substrate. 249 to 250 (RG) lines the NADPH pocket.

Belongs to the GTP cyclohydrolase I family. QueF type 2 subfamily. In terms of assembly, homodimer.

Its subcellular location is the cytoplasm. The catalysed reaction is 7-aminomethyl-7-carbaguanine + 2 NADP(+) = 7-cyano-7-deazaguanine + 2 NADPH + 3 H(+). It participates in tRNA modification; tRNA-queuosine biosynthesis. In terms of biological role, catalyzes the NADPH-dependent reduction of 7-cyano-7-deazaguanine (preQ0) to 7-aminomethyl-7-deazaguanine (preQ1). The chain is NADPH-dependent 7-cyano-7-deazaguanine reductase from Burkholderia mallei (strain NCTC 10247).